Reading from the N-terminus, the 216-residue chain is Cell envelope integrity protein Cei (216 aa).

A helical transmembrane segment spans residues 25-45 (PAIVVVAFLVVVTCVMWTLAL).

The protein resides in the cell membrane. Its function is as follows. Contributes to cell envelope integrity and virulence. The sequence is that of Cell envelope integrity protein Cei from Mycobacterium tuberculosis (strain ATCC 25618 / H37Rv).